Consider the following 366-residue polypeptide: S-adenosylmethionine:tRNA ribosyltransferase-isomerase (366 aa).

This sequence belongs to the QueA family. In terms of assembly, monomer.

It is found in the cytoplasm. The catalysed reaction is 7-aminomethyl-7-carbaguanosine(34) in tRNA + S-adenosyl-L-methionine = epoxyqueuosine(34) in tRNA + adenine + L-methionine + 2 H(+). It functions in the pathway tRNA modification; tRNA-queuosine biosynthesis. Functionally, transfers and isomerizes the ribose moiety from AdoMet to the 7-aminomethyl group of 7-deazaguanine (preQ1-tRNA) to give epoxyqueuosine (oQ-tRNA). In Synechococcus sp. (strain CC9605), this protein is S-adenosylmethionine:tRNA ribosyltransferase-isomerase.